Reading from the N-terminus, the 333-residue chain is tRNA dimethylallyltransferase (333 aa).

ATP is bound at residue 23–30; sequence GPTGAGKT. 25–30 contributes to the substrate binding site; it reads TGAGKT. Interaction with substrate tRNA stretches follow at residues 53-56 and 177-181; these read DSAL and QRVQR.

The protein belongs to the IPP transferase family. In terms of assembly, monomer. Requires Mg(2+) as cofactor.

The enzyme catalyses adenosine(37) in tRNA + dimethylallyl diphosphate = N(6)-dimethylallyladenosine(37) in tRNA + diphosphate. Catalyzes the transfer of a dimethylallyl group onto the adenine at position 37 in tRNAs that read codons beginning with uridine, leading to the formation of N6-(dimethylallyl)adenosine (i(6)A). The chain is tRNA dimethylallyltransferase from Polynucleobacter asymbioticus (strain DSM 18221 / CIP 109841 / QLW-P1DMWA-1) (Polynucleobacter necessarius subsp. asymbioticus).